Consider the following 434-residue polypeptide: MSAKWEKTEENTGVLTIEVEADKVNDALDKAFKKVVKKVNVPGFRKGKVPRGLFEKQFGVESLYQDAIDILLPEAYANAVEETGIYPVDRPEIDVESIGKNEPLIVKATVTVKPEVKLGDYKGLEVEVPSTDVTDEDVEAELKKLQEQHAELVVLEEGEIANGDTAVIDFAGYVDGEAFEGGTAENYSLEIGSNSFIPGFEEQLVGLKSGEEKDVEVTFPEEYHAEELAGKPATFKVKVHDIKRKELPELDDEFAKDVNEKVETLDELKNELRSTLEEQKKTASENAVRDSLLEKAAEQAEINVPEAMIETETDRMLQEFGQRLQAQGMNLDMYFQFSGQTEEDMRNQFKEDAEKRVRVNLTLEAIAEAENVEVSEEEIEEEFQKMADMYQRSVEEIKALLAAQGGTDNVKGDLKLRKAIDVLVENSKEVTTES.

The PPIase FKBP-type domain maps to 163–248 (GDTAVIDFAG…VHDIKRKELP (86 aa)).

It belongs to the FKBP-type PPIase family. Tig subfamily.

The protein localises to the cytoplasm. The enzyme catalyses [protein]-peptidylproline (omega=180) = [protein]-peptidylproline (omega=0). Involved in protein export. Acts as a chaperone by maintaining the newly synthesized protein in an open conformation. Functions as a peptidyl-prolyl cis-trans isomerase. This Shouchella clausii (strain KSM-K16) (Alkalihalobacillus clausii) protein is Trigger factor.